Here is a 245-residue protein sequence, read N- to C-terminus: Galectin-3 (245 aa).

The segment at M1–P30 is disordered. Residue A2 is modified to N-acetylalanine. The residue at position 6 (S6) is a Phosphoserine; by CK1. Tandem repeats lie at residues Y35–A43, Y44–A52, Y53–A61, and Y62–A70. The tract at residues Y35 to A99 is 7 X 9 AA tandem repeats of Y-P-G-X(3)-P-[GS]-A. The segment at Q47 to P68 is disordered. The 5; approximate repeat unit spans residues Y71 to A78. A 6; approximate repeat occupies Y79–A88. A 7; approximate repeat occupies Y89–A99. Residues Y113–T243 form the Galectin domain. A beta-D-galactoside is bound at residue W176–Q182. S183 bears the Phosphoserine mark. Residues K221–T236 carry the Nuclear export signal motif.

As to quaternary structure, probably forms homo- or heterodimers. Interacts with DMBT1. Interacts with CD6 and ALCAM. Forms a complex with the ITGA3, ITGB1 and CSPG4. Interacts with LGALS3BP, LYPD3, ZFTRAF1 and UACA. Interacts with TRIM16; this interaction mediates autophagy of damage endomembranes. Interacts with cargo receptor TMED10; the interaction mediates the translocation from the cytoplasm into the ERGIC (endoplasmic reticulum-Golgi intermediate compartment) and thereby secretion. Interacts with and inhibits by binding NCR3/NKp30.

It localises to the cytoplasm. It is found in the nucleus. The protein resides in the secreted. Functionally, galactose-specific lectin which binds IgE. May mediate with the alpha-3, beta-1 integrin the stimulation by CSPG4 of endothelial cells migration. Together with DMBT1, required for terminal differentiation of columnar epithelial cells during early embryogenesis. In the nucleus: acts as a pre-mRNA splicing factor. Involved in acute inflammatory responses including neutrophil activation and adhesion, chemoattraction of monocytes macrophages, opsonization of apoptotic neutrophils, and activation of mast cells. Together with TRIM16, coordinates the recognition of membrane damage with mobilization of the core autophagy regulators ATG16L1 and BECN1 in response to damaged endomembranes. When secreted, interacts with NK cell-activating receptor NCR3/NKp30 acting as an inhibitory ligand which antagonizes NK cell attack. This is Galectin-3 (LGALS3) from Cricetulus longicaudatus (Long-tailed dwarf hamster).